We begin with the raw amino-acid sequence, 528 residues long: GMP synthase [glutamine-hydrolyzing] (528 aa).

The Glutamine amidotransferase type-1 domain maps to 13–203; it reads TVLVVDFGAQ…LYEAAGCRPT (191 aa). Cys90 acts as the Nucleophile in catalysis. Catalysis depends on residues His177 and Glu179. A GMPS ATP-PPase domain is found at 204–402; the sequence is WTMVNIVEDQ…LGLPAEMVWR (199 aa). 231-237 is a binding site for ATP; that stretch reads SGGVDSA.

In terms of assembly, homodimer.

The catalysed reaction is XMP + L-glutamine + ATP + H2O = GMP + L-glutamate + AMP + diphosphate + 2 H(+). Its pathway is purine metabolism; GMP biosynthesis; GMP from XMP (L-Gln route): step 1/1. Catalyzes the synthesis of GMP from XMP. This is GMP synthase [glutamine-hydrolyzing] from Thermobifida fusca (strain YX).